A 205-amino-acid polypeptide reads, in one-letter code: Protease (205 aa).

Residues H54, D71, and C122 contribute to the active site.

Belongs to the peptidase C5 family. Interacts with protease cofactor pVI-C; this interaction is necessary for protease activation.

It localises to the virion. It is found in the host nucleus. The catalysed reaction is Cleaves proteins of the adenovirus and its host cell at two consensus sites: -Yaa-Xaa-Gly-Gly-|-Xaa- and -Yaa-Xaa-Gly-Xaa-|-Gly- (in which Yaa is Met, Ile or Leu, and Xaa is any amino acid).. Its activity is regulated as follows. Requires DNA and protease cofactor for maximal activation. Inside nascent virions, becomes partially activated by binding to the viral DNA, allowing it to cleave the cofactor that binds to the protease and fully activates it. Actin, like the viral protease cofactor, seems to act as a cofactor in the cleavage of cytokeratin 18 and of actin itself. In terms of biological role, cleaves viral precursor proteins (pTP, pIIIa, pVI, pVII, pVIII, and pX) inside newly assembled particles giving rise to mature virions. Protease complexed to its cofactor slides along the viral DNA to specifically locate and cleave the viral precursors. Mature virions have a weakened organization compared to the unmature virions, thereby facilitating subsequent uncoating. Without maturation, the particle lacks infectivity and is unable to uncoat. Late in adenovirus infection, in the cytoplasm, may participate in the cytoskeleton destruction. Cleaves host cell cytoskeletal keratins K7 and K18. This chain is Protease, found in Homo sapiens (Human).